The following is a 134-amino-acid chain: Large-conductance mechanosensitive channel (134 aa).

Helical transmembrane passes span 16-36 and 81-101; these read VIDLAVAVVIGAAFGKIVTAL and GDFLNTILQFIIIAFAIFIIV.

Belongs to the MscL family. In terms of assembly, homopentamer.

The protein localises to the cell inner membrane. Its function is as follows. Channel that opens in response to stretch forces in the membrane lipid bilayer. May participate in the regulation of osmotic pressure changes within the cell. The sequence is that of Large-conductance mechanosensitive channel from Xylella fastidiosa (strain 9a5c).